We begin with the raw amino-acid sequence, 459 residues long: DnaJ homolog subfamily A member 1 homolog (459 aa).

The 68-residue stretch at 6-73 (EYYERLGVKP…EKRKMYDSYG (68 aa)) folds into the J domain. The CR-type zinc-finger motif lies at 158 to 243 (GKLVKISISR…CKGKRVIQGK (86 aa)). Zn(2+) contacts are provided by C171, C174, C188, C191, C215, C218, C231, and C234. 4 CXXCXGXG motif repeats span residues 171–178 (CKTCKGSG), 188–195 (CPTCNGSR), 215–222 (CHTCHGTG), and 231–238 (CKECKGKR). The disordered stretch occupies residues 405–459 (NTNEQSSHGGAGGAYQQHGGAYGHQKQQQQGFNPADFGAQFGGGGPQQAQQCQQQ). Residues 418–435 (AYQQHGGAYGHQKQQQQG) are compositionally biased toward low complexity. C456 carries the cysteine methyl ester modification. C456 carries S-farnesyl cysteine lipidation. Residues 457-459 (QQQ) constitute a propeptide, removed in mature form.

The protein localises to the membrane. It is found in the cytoplasm. It localises to the microsome. The protein resides in the mitochondrion. Its subcellular location is the nucleus. The protein localises to the perinuclear region. Co-chaperone for Hsp70 family members. Plays a role in protein transport into mitochondria and in the regulation of apoptosis via its role as co-chaperone. This is DnaJ homolog subfamily A member 1 homolog (dnaja1) from Dictyostelium discoideum (Social amoeba).